The sequence spans 345 residues: Dense granule protein 4 (345 aa).

The first 20 residues, 1-20 (MQGTWFSLFVVVMVSHLACG), serve as a signal peptide directing secretion. Positions 227–251 (SVSVSTEDSGLTGVKDSSSSESTVT) are enriched in polar residues. The disordered stretch occupies residues 227-271 (SVSVSTEDSGLTGVKDSSSSESTVTPADEAASESEEGDKTSRKSK). A helical transmembrane segment spans residues 276–296 (ILTGLGVAATLAAAAAAAKAV). The tract at residues 298–345 (GFGGTRTSTAPAEAGKTELDDGYRPPPFNPRPSPYAELLKDLERMRKE) is disordered. Residues 321–330 (RPPPFNPRPS) show a composition bias toward pro residues. Basic and acidic residues predominate over residues 335–345 (LLKDLERMRKE).

O-glycosylated.

The protein resides in the secreted. Its subcellular location is the parasitophorous vacuole lumen. The protein localises to the parasitophorous vacuole membrane. It is found in the cytoplasmic vesicle. It localises to the secretory vesicle. Functionally, major granular component involved in excreted-secreted antigen (ESA) immunity. This Toxoplasma gondii protein is Dense granule protein 4 (GRA4).